We begin with the raw amino-acid sequence, 82 residues long: U-scoloptoxin(21)-Sm3a (82 aa).

An N-terminal signal peptide occupies residues 1-21 (MKIIALLLMVFLDFIIVNXAE).

It belongs to the scoloptoxin-21 family. As to expression, expressed by the venom gland.

The protein resides in the secreted. The protein is U-scoloptoxin(21)-Sm3a of Scolopendra morsitans (Tanzanian blue ringleg centipede).